The chain runs to 520 residues: MRNKKILKEDELLSETQQAAFHQIAMEPFEINVPKPKRRNGVNFSLAVVVIYLILLTAGAGLLVVQVLNLQARLRVLEMYFLNDTLAAEDSPSFSLLQSAHPGEHLAQGASRLQVLQAQLTWVRVSHEHLLQRVDNFTQNPGMFRIKGEQGAPGLQGHKGAMGMPGAPGPPGPPAEKGAKGAMGRDGATGPSGPQGPPGVKGEAGLQGPQGAPGKQGATGTPGPQGEKGSKGDGGLIGPKGETGTKGEKGDLGLPGSKGDRGMKGDAGVMGPPGAQGSKGDFGRPGPPGLAGFPGAKGDQGQPGLQGVPGPPGAVGHPGAKGEPGSAGSPGRAGLPGSPGSPGATGLKGSKGDTGLQGQQGRKGESGVPGPAGVKGEQGSPGLAGPKGAPGQAGQKGDQGVKGSSGEQGVKGEKGERGENSVSVRIVGSSNRGRAEVYYSGTWGTICDDEWQNSDAIVFCRMLGYSKGRALYKVGAGTGQIWLDNVQCRGTESTLWSCTKNSWGHHDCSHEEDAGVECSV.

Residues 1 to 43 are Cytoplasmic-facing; it reads MRNKKILKEDELLSETQQAAFHQIAMEPFEINVPKPKRRNGVN. Residues 44 to 64 form a helical; Signal-anchor for type II membrane protein membrane-spanning segment; sequence FSLAVVVIYLILLTAGAGLLV. Over 65–520 the chain is Extracellular; that stretch reads VQVLNLQARL…EEDAGVECSV (456 aa). N83 and N136 each carry an N-linked (GlcNAc...) asparagine glycan. The disordered stretch occupies residues 142-423; it reads GMFRIKGEQG…KGERGENSVS (282 aa). The 273-residue stretch at 147 to 419 folds into the Collagen-like domain; sequence KGEQGAPGLQ…VKGEKGERGE (273 aa). Low complexity-rich tracts occupy residues 203–227, 290–345, and 380–398; these read EAGL…PQGE, LAGF…PGAT, and SPGL…QKGD. Residues 410–419 are compositionally biased toward basic and acidic residues; the sequence is VKGEKGERGE. Positions 424–519 constitute an SRCR domain; the sequence is VRIVGSSNRG…HEEDAGVECS (96 aa). Disulfide bonds link C447–C508, C460–C518, and C488–C498.

As to quaternary structure, homotrimer; disulfide-linked. Trimers may assemble in larger oligomers thus resulting in the creation of a large surface capable of interacting with very large ligands. Post-translationally, N-glycosylated. Expressed in alveolar macrophages (at protein level). Detected in macrophages from various tissues including thymus, kidney, Kupffer cells of liver, and spleen.

It localises to the cell membrane. Pattern recognition receptor (PRR) which binds Gram-positive and Gram-negative bacteria. Also plays a role in binding of unopsonized particles by alveolar macrophages. Binds to the secretoglobin SCGB3A2. This is Macrophage receptor MARCO (MARCO) from Homo sapiens (Human).